The following is a 138-amino-acid chain: Aspartate 1-decarboxylase (138 aa).

S25 (schiff-base intermediate with substrate; via pyruvic acid) is an active-site residue. A Pyruvic acid (Ser) modification is found at S25. T57 contacts substrate. Residue Y58 is the Proton donor of the active site. 73–75 (GAA) provides a ligand contact to substrate. The disordered stretch occupies residues 117–138 (VDADPTAPPAPGLERSPLAEPV).

The protein belongs to the PanD family. As to quaternary structure, heterooctamer of four alpha and four beta subunits. Requires pyruvate as cofactor. In terms of processing, is synthesized initially as an inactive proenzyme, which is activated by self-cleavage at a specific serine bond to produce a beta-subunit with a hydroxyl group at its C-terminus and an alpha-subunit with a pyruvoyl group at its N-terminus.

The protein resides in the cytoplasm. The catalysed reaction is L-aspartate + H(+) = beta-alanine + CO2. Its pathway is cofactor biosynthesis; (R)-pantothenate biosynthesis; beta-alanine from L-aspartate: step 1/1. Its function is as follows. Catalyzes the pyruvoyl-dependent decarboxylation of aspartate to produce beta-alanine. This chain is Aspartate 1-decarboxylase, found in Clavibacter michiganensis subsp. michiganensis (strain NCPPB 382).